The chain runs to 401 residues: Membrane protein UL43 homolog (401 aa).

The next 10 membrane-spanning stretches (helical) occupy residues 43 to 63, 67 to 87, 93 to 113, 124 to 144, 159 to 179, 182 to 202, 259 to 279, 294 to 314, 332 to 352, and 379 to 399; these read FVGI…IDLL, STCL…RVPI, IVTV…SVWV, LIVV…ISLF, ASLL…LVEL, VPIG…FGLA, PGVI…WIVL, YVVF…QLVI, AVCM…SLAF, and ISRW…ATII.

This sequence belongs to the alphaherpesvirinae HHV-1 UL43 family.

The protein localises to the membrane. The polypeptide is Membrane protein UL43 homolog (Equine herpesvirus 1 (strain Ab4p) (EHV-1)).